The sequence spans 221 residues: GTPase Obg (221 aa).

In terms of domain architecture, OBG-type G spans P1–Q61. GTP is bound by residues N10–D13 and S42–V44. In terms of domain architecture, OCT spans V82 to P162.

Belongs to the TRAFAC class OBG-HflX-like GTPase superfamily. OBG GTPase family. Monomer. Mg(2+) is required as a cofactor.

The protein resides in the cytoplasm. In terms of biological role, an essential GTPase which binds GTP, GDP and possibly (p)ppGpp with moderate affinity, with high nucleotide exchange rates and a fairly low GTP hydrolysis rate. Plays a role in control of the cell cycle, stress response, ribosome biogenesis and in those bacteria that undergo differentiation, in morphogenesis control. The chain is GTPase Obg from Corynebacterium melassecola.